The primary structure comprises 184 residues: Photosystem I assembly protein Ycf4 (184 aa).

2 helical membrane-spanning segments follow: residues 22–42 and 57–77; these read FCWA…GTSS and IVFF…LFIS.

The protein belongs to the Ycf4 family.

The protein resides in the plastid. It is found in the chloroplast thylakoid membrane. Functionally, seems to be required for the assembly of the photosystem I complex. The chain is Photosystem I assembly protein Ycf4 from Lactuca sativa (Garden lettuce).